A 182-amino-acid chain; its full sequence is Ribosome maturation factor RimM (182 aa).

In terms of domain architecture, PRC barrel spans 101-174 (QDEYFIHQLY…QIVVRLLPGL (74 aa)).

It belongs to the RimM family. As to quaternary structure, binds ribosomal protein uS19.

The protein localises to the cytoplasm. Its function is as follows. An accessory protein needed during the final step in the assembly of 30S ribosomal subunit, possibly for assembly of the head region. Essential for efficient processing of 16S rRNA. May be needed both before and after RbfA during the maturation of 16S rRNA. It has affinity for free ribosomal 30S subunits but not for 70S ribosomes. The sequence is that of Ribosome maturation factor RimM from Roseiflexus sp. (strain RS-1).